The chain runs to 652 residues: Forkhead box protein O1 (652 aa).

2 disordered regions span residues 1–62 and 112–154; these read MAEA…ASAS and VHPA…SSRR. Phosphothreonine; by PKB/AKT1 or PKB/AKT2 and SGK1 is present on Thr24. Low complexity predominate over residues 35-62; the sequence is SNSTTSSPAPSGGAAANPDAAASLASAS. Over residues 114 to 133 the composition is skewed to pro residues; the sequence is PAPPQPPPTGPLSQPPPVPP. Residues 134-146 show a composition bias toward low complexity; it reads SAAAAAGPLAGQP. A DNA-binding region (fork-head) is located at residues 156 to 232; that stretch reads AWGNLSYADL…VQNEGTGKSS (77 aa). 2 DNA-binding regions span residues 208-215 and 231-234; these read NSIRHNLS and SSWW. Phosphoserine; by STK4/MST1 is present on Ser209. 3 positions are modified to phosphoserine: Ser215, Ser231, and Ser232. Disordered stretches follow at residues 231-342 and 383-410; these read SSWW…DVHS and SLTVSTQSSPGSMMQQTPCYSFAPPNTS. Residues Lys242 and Lys245 each carry the N6-acetyllysine modification. Ser246 bears the Phosphoserine; by CDK1 mark. An omega-N-methylarginine; by PRMT1 mark is found at Arg248 and Arg250. The short motif at 248 to 250 is the Nuclear localization signal element; sequence RRR. A Phosphoserine; by PKB/AKT1 and SGK1 modification is found at Ser253. N6-acetyllysine is present on residues Lys259, Lys262, and Lys271. The span at 261–272 shows a compositional bias: basic residues; it reads AKSRGRAAKKKA. Residues 280–562 are sufficient for interaction with NLK; it reads GPGDSPGSQF…TPVKTPLQVP (283 aa). Residues Ser284 and Ser295 each carry the phosphoserine modification. Polar residues predominate over residues 306–323; it reads NWSTFRPRTSSNASTISG. Ser316 carries the post-translational modification Phosphoserine; by PKB/AKT1 or PKB/AKT2. Ser319 carries the phosphoserine; by CK1 and SGK1 modification. Residue Ser322 is modified to Phosphoserine; by CK1. Residue Ser326 is modified to Phosphoserine. Thr330 carries the post-translational modification Phosphothreonine. Positions 360-456 are required for interaction with RUNX2; sequence SEISNPENME…GGLNQYNCAP (97 aa). A compositionally biased stretch (polar residues) spans 392 to 401; that stretch reads PGSMMQQTPC. At Lys420 the chain carries N6-acetyllysine. Positions 459–463 match the Required for interaction with SIRT1 motif; that stretch reads LKELL.

In terms of assembly, interacts with EP300 and CREBBP; the interactions acetylate FOXO1. Interacts with the 14-3-3 proteins, YWHAG and YWHAZ; the interactions require insulin-stimulated phosphorylation on Thr-24, promote nuclear exit and loss of transcriptional activity. Interacts with SKP2; the interaction ubiquitinates FOXO1 leading to its proteasomal degradation. Interacts with PMRT1; methylates FOXO1, prevents PKB/AKT1 phosphorylation and retains FOXO1 in the nucleus. Interacts (via an N-terminal domain) with FCOR; the interaction is direct, occurs in a forskolin-independent manner and prevents SIRT1 binding to FOXO1. Interacts (via the C-terminal half) with ATF4 (via its DNA-binding domain); the interaction occurs in osteoblasts, regulates glucose homeostasis via suppression of beta-cell proliferation and subsequent decrease in insulin production. Interacts with RUNX2; the interaction inhibits RUNX2 transcriptional activity and mediates the IGF1/insulin-dependent BGLAP expression in osteoblasts. Interacts with PPP2R1A; the interaction regulates the dephosphorylation of FOXO1 at Thr-24 and Ser-253 leading to its nuclear import. Binds to CDK1. Interacts with LRPPRC. Interacts with RUNX2; the interaction inhibits RUNX2 transcriptional activity and mediates the IGF1/insulin-dependent BGLAP expression in osteoblasts. Interacts with NLK. Interacts with SIRT1; the interaction results in the deacetylation of FOXO1 leading to activation of FOXO1-mediated transcription of genes involved in DNA repair and stress resistance. The interaction requires the presence of KRIT1 and is inhibited by FCOR. Interacts with SIRT2; the interaction is disrupted in response to oxidative stress or serum deprivation, leading to increased level of acetylated FOXO1, which promotes stress-induced autophagy by stimulating E1-like activating enzyme ATG7. Interacts (acetylated form) with ATG7; the interaction is increased in response to oxidative stress or serum deprivation and promotes the autophagic process leading to cell death. Interacts (acetylated form) with PPARG. Interacts with XBP1 isoform 2; this interaction is direct and leads to FOXO1 ubiquitination and degradation via the proteasome pathway. Interacts (via the Fork-head domain) with CEBPA; the interaction increases when FOXO1 is deacetylated. Interacts with WDFY2. Forms a complex with WDFY2 and AKT1. Interacts with CRY1. Interacts with PPIA/CYPA; the interaction promotes FOXO1 dephosphorylation, nuclear accumulation and transcriptional activity. Interacts with TOX4; FOXO1 is required for full induction of TOX4-dependent activity and the interaction is inhibited by insulin. Interacts (when phosphorylated on Ser-253) with STUB1/CHIP. In terms of processing, phosphorylation by NLK promotes nuclear export and inhibits the transcriptional activity. In response to growth factors, phosphorylation on Thr-24, Ser-253 and Ser-319 by PKB/AKT1 promotes nuclear export and inactivation of transactivational activity. Phosphorylation on Thr-24 is required for binding 14-3-3 proteins. Phosphorylation of Ser-253 decreases DNA-binding activity and promotes the phosphorylation of Thr-24 and Ser-316, permitting phosphorylation of Ser-319 and Ser-322, probably by CDK1, leading to nuclear exclusion and loss of function. Stress signals, such as response to oxygen or nitric oxide, attenuate the PKB/AKT1-mediated phosphorylation leading to nuclear retention. Phosphorylation of Ser-326 is independent of IGF1 and leads to reduced function. Dephosphorylated on Thr-24 and Ser-253 by PP2A in beta-cells under oxidative stress leading to nuclear retention. Phosphorylation of Ser-246 by CDK1 disrupts binding of 14-3-3 proteins leading to nuclear accumulation and has no effect on DNA-binding nor transcriptional activity. Phosphorylation by STK4/MST1 on Ser-209, upon oxidative stress, inhibits binding to 14-3-3 proteins and nuclear export. PPIA/CYPA promotes its dephosphorylation on Ser-253. Ubiquitinated by SKP2. Ubiquitinated, leading to proteasomal degradation. Ubiquitinated by STUB1/CHIP; when Ser-253 is phosphorylated. Post-translationally, methylation inhibits PKB/AKT1-mediated phosphorylation at Ser-253, promoting nuclear retention and increasing the transcriptional activity and cell death. Methylation increased by oxidative stress. In terms of processing, acetylation at Lys-259 and Lys-271 are necessary for autophagic cell death induction. Deacetylated by SIRT2 in response to oxidative stress or serum deprivation, thereby negatively regulating FOXO1-mediated autophagic cell death. Once in the nucleus, acetylated by CREBBP/EP300. Acetylation diminishes the interaction with target DNA and attenuates the transcriptional activity. It increases the phosphorylation at Ser-253, and is required for the transcriptional inhibition by FCOR. Deacetylation by SIRT1 results in reactivation of the transcriptional activity. Acetylation of FOXO1 diminishes its binding to PPARG in adipocytes. Deacetylated by SIRT2; deacetylation of FOXO1 directly increases its repressive binding to PPARG and inhibits adipocyte differentiation. Oxidative stress by hydrogen peroxide treatment appears to promote deacetylation and uncoupling of insulin-induced phosphorylation. By contrast, resveratrol acts independently of acetylation. Acetylated at Lys-420, promoting its localization to the nucleus and transcription factor activity. Deacetylation at Lys-420 by SIRT6, promotes its translocation into the cytoplasm, preventing its transcription factor activity. Deacetylation and subsequent inhibition by SIRT6 has different effects depending on cell types: it inhibits gluconeogenesis in hepatocytes, promotes glucose sensing in pancreatic beta-cells and regulates lipid catabolism in brown adipocytes. Expressed in liver, white and brown adipose tissues (at protein level).

The protein resides in the cytoplasm. The protein localises to the nucleus. Functionally, transcription factor that is the main target of insulin signaling and regulates metabolic homeostasis in response to oxidative stress. Binds to the insulin response element (IRE) with consensus sequence 5'-TT[G/A]TTTTG-3' and the related Daf-16 family binding element (DBE) with consensus sequence 5'-TT[G/A]TTTAC-3'. Activity suppressed by insulin. Main regulator of redox balance and osteoblast numbers and controls bone mass. Orchestrates the endocrine function of the skeleton in regulating glucose metabolism. Also acts as a key regulator of chondrogenic commitment of skeletal progenitor cells in response to lipid availability: when lipids levels are low, translocates to the nucleus and promotes expression of SOX9, which induces chondrogenic commitment and suppresses fatty acid oxidation. Acts synergistically with ATF4 to suppress osteocalcin/BGLAP activity, increasing glucose levels and triggering glucose intolerance and insulin insensitivity. Also suppresses the transcriptional activity of RUNX2, an upstream activator of osteocalcin/BGLAP. Acts as an inhibitor of glucose sensing in pancreatic beta cells by acting as a transcription repressor and suppressing expression of PDX1. In hepatocytes, promotes gluconeogenesis by acting together with PPARGC1A and CEBPA to activate the expression of genes such as IGFBP1, G6PC1 and PCK1. Also promotes gluconeogenesis by directly promoting expression of PPARGC1A and G6PC1. Important regulator of cell death acting downstream of CDK1, PKB/AKT1 and STK4/MST1. Promotes neural cell death. Mediates insulin action on adipose tissue. Regulates the expression of adipogenic genes such as PPARG during preadipocyte differentiation and, adipocyte size and adipose tissue-specific gene expression in response to excessive calorie intake. Regulates the transcriptional activity of GADD45A and repair of nitric oxide-damaged DNA in beta-cells. Required for the autophagic cell death induction in response to starvation or oxidative stress in a transcription-independent manner. Mediates the function of MLIP in cardiomyocytes hypertrophy and cardiac remodeling. Positive regulator of apoptosis in cardiac smooth muscle cells as a result of its transcriptional activation of pro-apoptotic genes. Regulates endothelial cell (EC) viability and apoptosis in a PPIA/CYPA-dependent manner via transcription of CCL2 and BCL2L11 which are involved in EC chemotaxis and apoptosis. This chain is Forkhead box protein O1 (Foxo1), found in Mus musculus (Mouse).